Here is a 337-residue protein sequence, read N- to C-terminus: Lipoyl synthase (337 aa).

The [4Fe-4S] cluster site is built by cysteine 81, cysteine 86, cysteine 92, cysteine 107, cysteine 111, cysteine 114, and serine 323. One can recognise a Radical SAM core domain in the interval 93–312; that stretch reads FSHGTATFMI…EEYGNALGFS (220 aa).

Belongs to the radical SAM superfamily. Lipoyl synthase family. Requires [4Fe-4S] cluster as cofactor.

It is found in the cytoplasm. It catalyses the reaction [[Fe-S] cluster scaffold protein carrying a second [4Fe-4S](2+) cluster] + N(6)-octanoyl-L-lysyl-[protein] + 2 oxidized [2Fe-2S]-[ferredoxin] + 2 S-adenosyl-L-methionine + 4 H(+) = [[Fe-S] cluster scaffold protein] + N(6)-[(R)-dihydrolipoyl]-L-lysyl-[protein] + 4 Fe(3+) + 2 hydrogen sulfide + 2 5'-deoxyadenosine + 2 L-methionine + 2 reduced [2Fe-2S]-[ferredoxin]. Its pathway is protein modification; protein lipoylation via endogenous pathway; protein N(6)-(lipoyl)lysine from octanoyl-[acyl-carrier-protein]: step 2/2. Its function is as follows. Catalyzes the radical-mediated insertion of two sulfur atoms into the C-6 and C-8 positions of the octanoyl moiety bound to the lipoyl domains of lipoate-dependent enzymes, thereby converting the octanoylated domains into lipoylated derivatives. In Xanthomonas campestris pv. campestris (strain 8004), this protein is Lipoyl synthase.